The chain runs to 357 residues: DNA replication and repair protein RecF (357 aa).

31 to 38 (GQNGAGKT) is an ATP binding site.

The protein belongs to the RecF family.

The protein resides in the cytoplasm. In terms of biological role, the RecF protein is involved in DNA metabolism; it is required for DNA replication and normal SOS inducibility. RecF binds preferentially to single-stranded, linear DNA. It also seems to bind ATP. The sequence is that of DNA replication and repair protein RecF from Coxiella burnetii (strain RSA 493 / Nine Mile phase I).